Consider the following 255-residue polypeptide: tRNA (guanine-N(1)-)-methyltransferase (255 aa).

S-adenosyl-L-methionine-binding positions include Gly-112 and 131–136 (LGDYVL).

Belongs to the RNA methyltransferase TrmD family. Homodimer.

It is found in the cytoplasm. It catalyses the reaction guanosine(37) in tRNA + S-adenosyl-L-methionine = N(1)-methylguanosine(37) in tRNA + S-adenosyl-L-homocysteine + H(+). Specifically methylates guanosine-37 in various tRNAs. This is tRNA (guanine-N(1)-)-methyltransferase from Lacticaseibacillus paracasei (strain ATCC 334 / BCRC 17002 / CCUG 31169 / CIP 107868 / KCTC 3260 / NRRL B-441) (Lactobacillus paracasei).